We begin with the raw amino-acid sequence, 298 residues long: Putative S-adenosyl-L-methionine-dependent methyltransferase MSMEG_1480/MSMEI_1444 (298 aa).

S-adenosyl-L-methionine-binding positions include Asp-127 and 156-157 (DL).

The protein belongs to the UPF0677 family.

Its function is as follows. Exhibits S-adenosyl-L-methionine-dependent methyltransferase activity. This is Putative S-adenosyl-L-methionine-dependent methyltransferase MSMEG_1480/MSMEI_1444 from Mycolicibacterium smegmatis (strain ATCC 700084 / mc(2)155) (Mycobacterium smegmatis).